Consider the following 1025-residue polypeptide: Interferon-induced helicase C domain-containing protein 1 (1025 aa).

CARD domains are found at residues 7 to 97 (AEDS…YVKP) and 110 to 190 (AHDE…QTGN). Glycyl lysine isopeptide (Lys-Gly) (interchain with G-Cter in ISG15) cross-links involve residues Lys23 and Lys43. The disordered stretch occupies residues 273–297 (SLGHNSNMGRDSGTMGSDSDESVIQ). Residues 275 to 297 (GHNSNMGRDSGTMGSDSDESVIQ) are compositionally biased toward polar residues. Ser289, Ser291, and Ser302 each carry phosphoserine. A Helicase ATP-binding domain is found at 317-510 (AQPALDGKNI…SEAEKHILNI (194 aa)). Phosphoserine occurs at positions 645 and 648. The Helicase C-terminal domain maps to 700–872 (KLIKLRNTIL…NMKPEEYAHK (173 aa)). Ser828 bears the Phosphoserine; by RIOK3 mark. One can recognise an RLR CTR domain in the interval 893–1020 (AKQYNDNPSL…PDLDYSEYCL (128 aa)). The Zn(2+) site is built by Cys907, Cys910, Cys962, and Cys964.

Belongs to the helicase family. RLR subfamily. Monomer in the absence of ligands and homodimerizes in the presence of dsRNA ligands. Can assemble into helical or linear polymeric filaments on long dsRNA. Interacts with MAVS/IPS1. Interacts (via the CARD domains) with TKFC, the interaction is inhibited by viral infection. Interacts with PCBP2. Interacts with NLRC5. Interacts with PIAS2-beta. Interacts with DDX60. Interacts with ANKRD17. Interacts with IKBKE. Interacts with ATG5 and ATG12, either as ATG5 and ATG12 monomers or as ATG12-ATG5 conjugates. Interacts with ZCCHC3; leading to activate IFIH1/MDA5. Interacts with RNF123. Interacts with DDX3X. Interacts with NOD1; this interaction promotes transcription of antiviral genes and inhibition of viral replication. Interacts with ECSIT; this interaction bridges IFIH1 to the MAVS complex at the mitochondrion. During apoptosis, processed into 3 cleavage products. The helicase-containing fragment, once liberated from the CARD domains, translocate from the cytoplasm to the nucleus. The processed protein significantly sensitizes cells to DNA degradation. Post-translationally, sumoylated. Sumoylation positively regulates its role in type I interferon induction and is enhanced by PIAS2-beta. In terms of processing, ubiquitinated by RNF125, leading to its degradation by the proteasome. USP17/UPS17L2-dependent deubiquitination positively regulates the receptor. Ubiquitinated by TRIM25 via 'Lys-63'-linked ubiquitination, promoting activation of IFIH1/MDA5. Ubiquitinated by TRIM40 via 'Lys-48'-linked ubiquitination; leading to proteasomal degradation. Ubiquitinated by TRIM65 via 'Lys-63'-linked ubiquitination, promoting activation of IFIH1/MDA5. ISGylated by ISG15. ISGylation increases upon infection with viruses. ISGylation at Lys-23 and Lys-43 is dependent of dephosphorylation, regulates mitochondrial translocation and oligomerization. Essential for IFIH1/MDA5-mediated cytokine responses and restriction of virus replication. Post-translationally, phosphorylated. Dephosphorylated by phsophatases PP1; dephosphorylation precedes and is required for ISGylation. As to expression, expression is prominent in lung, liver, kidney, heart and spleen (at protein level). Widely expressed at low level.

The protein resides in the cytoplasm. It is found in the nucleus. Its subcellular location is the mitochondrion. The enzyme catalyses ATP + H2O = ADP + phosphate + H(+). Functionally, innate immune receptor which acts as a cytoplasmic sensor of viral nucleic acids and plays a major role in sensing viral infection and in the activation of a cascade of antiviral responses including the induction of type I interferons and pro-inflammatory cytokines. Its ligands include mRNA lacking 2'-O-methylation at their 5' cap and long-dsRNA (&gt;1 kb in length). Upon ligand binding it associates with mitochondria antiviral signaling protein (MAVS/IPS1) which activates the IKK-related kinases: TBK1 and IKBKE which phosphorylate interferon regulatory factors: IRF3 and IRF7 which in turn activate transcription of antiviral immunological genes, including interferons (IFNs); IFN-alpha and IFN-beta. Responsible for detecting the Picornaviridae family members such as encephalomyocarditis virus (EMCV), mengo encephalomyocarditis virus (ENMG), and theiler's murine encephalomyelitis virus (TMEV). Can also detect other viruses such as dengue virus (DENV), west Nile virus (WNV), and reovirus. Also involved in antiviral signaling in response to viruses containing a dsDNA genome, such as vaccinia virus. Plays an important role in amplifying innate immune signaling through recognition of RNA metabolites that are produced during virus infection by ribonuclease L (RNase L). May play an important role in enhancing natural killer cell function and may be involved in growth inhibition and apoptosis in several tumor cell lines. This is Interferon-induced helicase C domain-containing protein 1 from Mus musculus (Mouse).